The following is a 562-amino-acid chain: Beta-hexosaminidase (562 aa).

Residues 1–22 (MVLDKMIIFHLLLWLCNVVVHA) form the signal peptide. N-linked (GlcNAc...) asparagine glycosylation is found at asparagine 38, asparagine 52, asparagine 111, asparagine 337, asparagine 382, asparagine 396, and asparagine 463.

Belongs to the glycosyl hydrolase 20 family.

The enzyme catalyses Hydrolysis of terminal non-reducing N-acetyl-D-hexosamine residues in N-acetyl-beta-D-hexosaminides.. Has a broad substrate specificity. The chain is Beta-hexosaminidase (HEX1) from Candida albicans (Yeast).